The sequence spans 124 residues: Prefoldin subunit beta (124 aa).

The protein belongs to the prefoldin subunit beta family. Heterohexamer of two alpha and four beta subunits.

It localises to the cytoplasm. Functionally, molecular chaperone capable of stabilizing a range of proteins. Seems to fulfill an ATP-independent, HSP70-like function in archaeal de novo protein folding. The chain is Prefoldin subunit beta (pfdB) from Thermoplasma volcanium (strain ATCC 51530 / DSM 4299 / JCM 9571 / NBRC 15438 / GSS1).